A 266-amino-acid polypeptide reads, in one-letter code: Putative carbamate hydrolase RutD (266 aa).

Residues 14 to 115 (PVVVLISGLG…TVLISVNGWL (102 aa)) form the AB hydrolase-1 domain.

This sequence belongs to the AB hydrolase superfamily. Hydrolase RutD family.

It carries out the reaction carbamate + 2 H(+) = NH4(+) + CO2. Involved in pyrimidine catabolism. May facilitate the hydrolysis of carbamate, a reaction that can also occur spontaneously. This is Putative carbamate hydrolase RutD from Shigella sonnei (strain Ss046).